Reading from the N-terminus, the 129-residue chain is GM1b/asialo-GM1 oligosaccharide-binding R-type lectin (129 aa).

Residues 21 to 23 (FYN), 26 to 28 (RKD), F32, and 37 to 40 (YDDQ) each bind a carbohydrate.

As to quaternary structure, homodimer. Highest expression in the outer part of the mantle rim. Highly expressed in gills, with a much lower expression in the digestive gland and posterior adductor muscle. Scarcely detectable in foot.

With respect to regulation, hemagglutination activity requires divalent cations such as Ca(2+). Hemagglutination activity is weakly inhibited by monosaccharides such as D-Gal (25 mM), D-GalNAc (25 mM) and D-Fuc (25 mM) and by disaccharides such as melibiose (25 mM) and lactose (25 mM). Hemagglutination activity is inhibited by bovine submaxillary mucin, but not by porcine stomach mucin or fetuin. Functionally, galbeta1-3GalNAcbeta1-4Galbeta1-4Glc oligosaccharide-binding lectin. Binds strongly to the oligosaccharides of ganglioside GM1b and to a lesser extent its precursor asialo-GM1. Binds weakly to asialo-GM2 oligosaccharide and to the glycan moiety of globo-series stage-specific embryonal antigen 4 (SSEA-4) hexaose. Binds galactose, N-acetylgalactose and lactose. Does not bind GM1. Does not bind to Gal-beta1,3-GalNAc (Thomsen-Friedenreich antigen), the oligosaccharide of GM1a ganglioside or SSEA-4 tetraose. Does not bind to N-glycans, O-glycans or glycosaminoglycans of glycoproteins. Does not bind Lewis glycans, derivatives of lactose or N-acetyllactosamine or blood group (ABH-type) oligosaccharides. Does not bind glucose. Has hemagglutination activity towards rabbit erythrocytes. Displays cytotoxic effects against various cultured cell lines including human breast (MCF-7), cervical (HeLa) and colon cancer (Caco2) cell lines, as well as dog kidney (MDCK) cell line that express asialo-GM1 oligosaccharide at their cell surface. Shows dose- and time-dependent activation of MKK3/6, ERK1/2 and p38 MAPK, as well as caspase-3/9 in HeLa cervical cancer cells. No cytotoxic effect on BT474 human breast cancer cell line. May be involved in recognition of glycans found on parasitic or symbiotic microorganisms. This Mytilisepta virgata (Purplish bifurcate mussel) protein is GM1b/asialo-GM1 oligosaccharide-binding R-type lectin.